Here is a 243-residue protein sequence, read N- to C-terminus: Peptidyl-tRNA hydrolase (243 aa).

Residue tyrosine 14 participates in tRNA binding. Residue histidine 19 is the Proton acceptor of the active site. TRNA contacts are provided by phenylalanine 64, asparagine 66, and asparagine 112. The segment at 188–243 (GGKAEEEKPRKDNKTTEKKPAGQSHIHQARNHNQPKVLTTGPMADILKKMFGNKGE) is disordered. Residues 190-207 (KAEEEKPRKDNKTTEKKP) are compositionally biased toward basic and acidic residues.

The protein belongs to the PTH family. In terms of assembly, monomer.

It is found in the cytoplasm. The catalysed reaction is an N-acyl-L-alpha-aminoacyl-tRNA + H2O = an N-acyl-L-amino acid + a tRNA + H(+). Functionally, hydrolyzes ribosome-free peptidyl-tRNAs (with 1 or more amino acids incorporated), which drop off the ribosome during protein synthesis, or as a result of ribosome stalling. Its function is as follows. Catalyzes the release of premature peptidyl moieties from peptidyl-tRNA molecules trapped in stalled 50S ribosomal subunits, and thus maintains levels of free tRNAs and 50S ribosomes. This chain is Peptidyl-tRNA hydrolase, found in Rhizobium leguminosarum bv. trifolii (strain WSM2304).